The sequence spans 40 residues: IPRPLDPCIAQNGRCFTGICRYPYFWIGTCRNGKSCCRRR.

Disulfide bonds link cysteine 8–cysteine 36, cysteine 15–cysteine 30, and cysteine 20–cysteine 37.

The protein localises to the secreted. Functionally, has antibacterial activity against the Gram-positive bacterium S.aureus 1056 MRSA (MIC=2.78 ug/ml) and the Gram-negative bacterium E.coli O157:H7 (MIC=2.41 ug/ml). Does not have antifungal activity against the yeast C.albicans 3153A. The polypeptide is Ostricacin-3 (Struthio camelus (Common ostrich)).